An 868-amino-acid polypeptide reads, in one-letter code: mRNA-capping enzyme (868 aa).

Catalysis depends on Lys282, which acts as the N6-GMP-lysine intermediate. An mRNA cap 0 methyltransferase domain is found at 594 to 868 (GIYRAQTALI…LFGFICLRKN (275 aa)). S-adenosyl-L-methionine-binding positions include Lys607, Gly624, Asp646, and 710-712 (LFI).

It in the N-terminal section; belongs to the dsDNA virus mRNA guanylyltransferase family. In the C-terminal section; belongs to the class I-like SAM-binding methyltransferase superfamily. mRNA cap 0 methyltransferase family. Part of the viral DNA-directed RNA polymerase that consists of 8 polII-like subunits (RPB1, RPB2, RPB3, RPB5, RPB6, RPB7, RPB9, RPB10), a capping enzyme and a termination factor.

It is found in the virion. The enzyme catalyses a 5'-end triphospho-ribonucleoside in mRNA + H2O = a 5'-end diphospho-ribonucleoside in mRNA + phosphate + H(+). It carries out the reaction a 5'-end diphospho-ribonucleoside in mRNA + GTP + H(+) = a 5'-end (5'-triphosphoguanosine)-ribonucleoside in mRNA + diphosphate. The catalysed reaction is a 5'-end (5'-triphosphoguanosine)-ribonucleoside in mRNA + S-adenosyl-L-methionine = a 5'-end (N(7)-methyl 5'-triphosphoguanosine)-ribonucleoside in mRNA + S-adenosyl-L-homocysteine. The protein operates within mRNA processing; mRNA capping. In terms of biological role, probably catalyzes the second reaction in the mRNA cap formation pathway. Forms a covalent complex with GTP. In Ornithodoros (relapsing fever ticks), this protein is mRNA-capping enzyme.